A 231-amino-acid polypeptide reads, in one-letter code: Demethylmenaquinone methyltransferase (231 aa).

S-adenosyl-L-methionine-binding positions include Thr62, Asp80, 102-103, and Ser119; that span reads DA.

The protein belongs to the class I-like SAM-binding methyltransferase superfamily. MenG/UbiE family.

The enzyme catalyses a 2-demethylmenaquinol + S-adenosyl-L-methionine = a menaquinol + S-adenosyl-L-homocysteine + H(+). It functions in the pathway quinol/quinone metabolism; menaquinone biosynthesis; menaquinol from 1,4-dihydroxy-2-naphthoate: step 2/2. Methyltransferase required for the conversion of demethylmenaquinol (DMKH2) to menaquinol (MKH2). This Streptomyces avermitilis (strain ATCC 31267 / DSM 46492 / JCM 5070 / NBRC 14893 / NCIMB 12804 / NRRL 8165 / MA-4680) protein is Demethylmenaquinone methyltransferase.